We begin with the raw amino-acid sequence, 190 residues long: Pancreatic IgW, short secretory form (190 aa).

The Ig-like C1-type domain occupies 53–145; the sequence is PNITALVPSV…PPSNFRSMIS (93 aa). Asn-54 carries N-linked (GlcNAc...) asparagine glycosylation. A disulfide bond links Cys-74 and Cys-131. Residue Asn-179 is glycosylated (N-linked (GlcNAc...) asparagine).

Expressed in pancreas, spleen, epigonal organ and at low levels in several other tissues.

It is found in the secreted. The polypeptide is Pancreatic IgW, short secretory form (Ginglymostoma cirratum (Nurse shark)).